The primary structure comprises 683 residues: Long-chain fatty acid transport protein 3 (683 aa).

The helical transmembrane segment at 3–23 (ALLLLPLLLLLPLLLLKLHLW) threads the bilayer. Gly residues predominate over residues 119–128 (GGDSGEGSAG). Positions 119–145 (GGDSGEGSAGEGERAAPGAGDAAAGSG) are disordered. Residues 133–145 (AAPGAGDAAAGSG) show a composition bias toward low complexity. ATP is bound by residues 288–292 (TSGTT), His-331, Thr-428, Asp-528, Arg-543, and Lys-635.

This sequence belongs to the ATP-dependent AMP-binding enzyme family. As to expression, expressed in bronchial and bronchiolar epithelial cells (at protein level).

The protein resides in the mitochondrion membrane. The catalysed reaction is a fatty acid(in) = a fatty acid(out). It catalyses the reaction a long-chain fatty acid + ATP + CoA = a long-chain fatty acyl-CoA + AMP + diphosphate. It carries out the reaction hexadecanoate + ATP + CoA = hexadecanoyl-CoA + AMP + diphosphate. The enzyme catalyses (9Z)-octadecenoate + ATP + CoA = (9Z)-octadecenoyl-CoA + AMP + diphosphate. The catalysed reaction is (9Z,12Z)-octadecadienoate + ATP + CoA = (9Z,12Z)-octadecadienoyl-CoA + AMP + diphosphate. It catalyses the reaction (5Z,8Z,11Z,14Z)-eicosatetraenoate + ATP + CoA = (5Z,8Z,11Z,14Z)-eicosatetraenoyl-CoA + AMP + diphosphate. It carries out the reaction a very long-chain fatty acid + ATP + CoA = a very long-chain fatty acyl-CoA + AMP + diphosphate. The enzyme catalyses tetracosanoate + ATP + CoA = tetracosanoyl-CoA + AMP + diphosphate. Functionally, mainly functions as an acyl-CoA ligase catalyzing the ATP-dependent formation of fatty acyl-CoA using LCFA and very-long-chain fatty acids (VLCFA) as substrates. Can mediate the levels of long-chain fatty acids (LCFA) in the cell by facilitating their transport across membranes. This is Long-chain fatty acid transport protein 3 from Homo sapiens (Human).